A 403-amino-acid chain; its full sequence is Acetate kinase (403 aa).

Asn-9 contacts Mg(2+). Lys-16 contributes to the ATP binding site. Residue Arg-93 participates in substrate binding. Residue Asp-150 is the Proton donor/acceptor of the active site. Residues 210-214 (HLGNG), 284-286 (DFR), and 332-336 (GVGEN) each bind ATP. Glu-388 contacts Mg(2+).

It belongs to the acetokinase family. Homodimer. The cofactor is Mg(2+). Mn(2+) serves as cofactor.

The protein resides in the cytoplasm. It catalyses the reaction acetate + ATP = acetyl phosphate + ADP. It functions in the pathway metabolic intermediate biosynthesis; acetyl-CoA biosynthesis; acetyl-CoA from acetate: step 1/2. Its function is as follows. Catalyzes the formation of acetyl phosphate from acetate and ATP. Can also catalyze the reverse reaction. This Corynebacterium jeikeium (strain K411) protein is Acetate kinase.